The following is a 273-amino-acid chain: Urease accessory protein UreD (273 aa).

This sequence belongs to the UreD family. UreD, UreF and UreG form a complex that acts as a GTP-hydrolysis-dependent molecular chaperone, activating the urease apoprotein by helping to assemble the nickel containing metallocenter of UreC. The UreE protein probably delivers the nickel.

The protein localises to the cytoplasm. Required for maturation of urease via the functional incorporation of the urease nickel metallocenter. This chain is Urease accessory protein UreD, found in Mycolicibacterium gilvum (strain PYR-GCK) (Mycobacterium gilvum (strain PYR-GCK)).